A 34-amino-acid polypeptide reads, in one-letter code: MEALVYTFLLVGTLGIIFFAIFFREPPKITSNKK.

The chain crosses the membrane as a helical span at residues 3 to 23 (ALVYTFLLVGTLGIIFFAIFF).

The protein belongs to the PsbT family. PSII is composed of 1 copy each of membrane proteins PsbA, PsbB, PsbC, PsbD, PsbE, PsbF, PsbH, PsbI, PsbJ, PsbK, PsbL, PsbM, PsbT, PsbY, PsbZ, Psb30/Ycf12, at least 3 peripheral proteins of the oxygen-evolving complex and a large number of cofactors. It forms dimeric complexes.

It localises to the plastid. Its subcellular location is the chloroplast thylakoid membrane. In terms of biological role, found at the monomer-monomer interface of the photosystem II (PS II) dimer, plays a role in assembly and dimerization of PSII. PSII is a light-driven water plastoquinone oxidoreductase, using light energy to abstract electrons from H(2)O, generating a proton gradient subsequently used for ATP formation. The polypeptide is Photosystem II reaction center protein T (Klebsormidium bilatum (Filamentous green alga)).